A 242-amino-acid chain; its full sequence is DNA repair protein RecO (242 aa).

Belongs to the RecO family.

Functionally, involved in DNA repair and RecF pathway recombination. This Wolbachia pipientis subsp. Culex pipiens (strain wPip) protein is DNA repair protein RecO.